Consider the following 949-residue polypeptide: Bifunctional uridylyltransferase/uridylyl-removing enzyme (949 aa).

The segment at 1–377 (MARHETSFPE…RFRNRVRKIP (377 aa)) is uridylyltransferase. A uridylyl-removing region spans residues 378–733 (GTLDFVDDGG…VRTHDFHAIT (356 aa)). In terms of domain architecture, HD spans 494-610 (VDEHLLRAVD…VDFAERVQSL (117 aa)). ACT domains are found at residues 734-815 (EITV…DVIA) and 845-926 (VIEV…ERMP). The disordered stretch occupies residues 925-949 (MPSGIIAPTPVPRASHGSKATKAET).

This sequence belongs to the GlnD family. Mg(2+) serves as cofactor.

The catalysed reaction is [protein-PII]-L-tyrosine + UTP = [protein-PII]-uridylyl-L-tyrosine + diphosphate. It carries out the reaction [protein-PII]-uridylyl-L-tyrosine + H2O = [protein-PII]-L-tyrosine + UMP + H(+). Uridylyltransferase (UTase) activity is inhibited by glutamine, while glutamine activates uridylyl-removing (UR) activity. Modifies, by uridylylation and deuridylylation, the PII regulatory proteins (GlnB and homologs), in response to the nitrogen status of the cell that GlnD senses through the glutamine level. Under low glutamine levels, catalyzes the conversion of the PII proteins and UTP to PII-UMP and PPi, while under higher glutamine levels, GlnD hydrolyzes PII-UMP to PII and UMP (deuridylylation). Thus, controls uridylylation state and activity of the PII proteins, and plays an important role in the regulation of nitrogen fixation and metabolism. The protein is Bifunctional uridylyltransferase/uridylyl-removing enzyme of Sinorhizobium medicae (strain WSM419) (Ensifer medicae).